The chain runs to 227 residues: Phosphatidylethanolamine-binding protein 4 (227 aa).

Positions 1-22 (MGWTMRLVTAALLLGLMMVVTG) are cleaved as a signal peptide. Asparagine 169 is a glycosylation site (N-linked (GlcNAc...) (complex) asparagine). The interval 188 to 227 (EPEASTQFMTQNYQDSPTLQAPRERASEPKHKNQAEIAAC) is important for secretion. The interval 202–227 (DSPTLQAPRERASEPKHKNQAEIAAC) is disordered. Basic and acidic residues predominate over residues 209–221 (PRERASEPKHKNQ).

Belongs to the phosphatidylethanolamine-binding protein family.

Its subcellular location is the secreted. Its function is as follows. Promotes AKT phosphorylation, suggesting a possible role in the PI3K-AKT signaling pathway. This Homo sapiens (Human) protein is Phosphatidylethanolamine-binding protein 4 (PEBP4).